We begin with the raw amino-acid sequence, 492 residues long: 1-aminocyclopropane-1-carboxylate synthase 1 (492 aa).

N6-(pyridoxal phosphate)lysine is present on K277.

Belongs to the class-I pyridoxal-phosphate-dependent aminotransferase family. As to quaternary structure, homodimer. Requires pyridoxal 5'-phosphate as cofactor.

It carries out the reaction S-adenosyl-L-methionine = 1-aminocyclopropane-1-carboxylate + S-methyl-5'-thioadenosine + H(+). It functions in the pathway alkene biosynthesis; ethylene biosynthesis via S-adenosyl-L-methionine; ethylene from S-adenosyl-L-methionine: step 1/2. Its function is as follows. Catalyzes the formation of 1-aminocyclopropane-1-carboxylate, a direct precursor of ethylene in higher plants. In Prunus mume (Japanese apricot), this protein is 1-aminocyclopropane-1-carboxylate synthase 1 (ACS1).